Consider the following 204-residue polypeptide: MSKAIILNNELQKNGEVALPERFKEIHSHNLYLYVKSYLASLRANSAKAKKRGEVSGGGKKPWSQKGGGRARAGSITSPVFVGGGVSHGPSNNRNYDLKVNKKQKKLALQYALMEKAEQGKLYVVDSLQVDSGKTKDAYAMFKTLNERSTLFVSQISDEKTFLAFRNLKECYLADANELNAYLVAAFRSVVIEKSLFENITKEG.

Residues 49–74 (AKKRGEVSGGGKKPWSQKGGGRARAG) are disordered. Residues 55 to 71 (VSGGGKKPWSQKGGGRA) show a composition bias toward gly residues.

Belongs to the universal ribosomal protein uL4 family. Part of the 50S ribosomal subunit.

One of the primary rRNA binding proteins, this protein initially binds near the 5'-end of the 23S rRNA. It is important during the early stages of 50S assembly. It makes multiple contacts with different domains of the 23S rRNA in the assembled 50S subunit and ribosome. Functionally, forms part of the polypeptide exit tunnel. In Wolinella succinogenes (strain ATCC 29543 / DSM 1740 / CCUG 13145 / JCM 31913 / LMG 7466 / NCTC 11488 / FDC 602W) (Vibrio succinogenes), this protein is Large ribosomal subunit protein uL4.